The sequence spans 271 residues: Tryptophan synthase alpha chain (271 aa).

Residues E49 and D60 each act as proton acceptor in the active site.

Belongs to the TrpA family. As to quaternary structure, tetramer of two alpha and two beta chains.

It catalyses the reaction (1S,2R)-1-C-(indol-3-yl)glycerol 3-phosphate + L-serine = D-glyceraldehyde 3-phosphate + L-tryptophan + H2O. It participates in amino-acid biosynthesis; L-tryptophan biosynthesis; L-tryptophan from chorismate: step 5/5. In terms of biological role, the alpha subunit is responsible for the aldol cleavage of indoleglycerol phosphate to indole and glyceraldehyde 3-phosphate. The protein is Tryptophan synthase alpha chain of Nitrosococcus oceani (strain ATCC 19707 / BCRC 17464 / JCM 30415 / NCIMB 11848 / C-107).